Reading from the N-terminus, the 99-residue chain is MRQRDVAALDAKYTKELADAKAENDALRDDVAAGRRRLHIKAVCQSVREATTASGVDNAASPRLADTAERDYFTLRERLVMMQAQLEGAQQYITEQCLK.

This Escherichia coli (strain K12) protein is Putative endopeptidase RzpR (rzpR).